A 432-amino-acid chain; its full sequence is GRAM domain-containing protein 2B (432 aa).

Residue Met1 is modified to N-acetylmethionine. Disordered regions lie at residues 1–61 (MTEL…SPDQ) and 74–106 (DGAS…SSQY). Basic and acidic residues-rich tracts occupy residues 9–39 (EDTK…EEKK) and 81–99 (DKND…ERKK). The region spanning 110 to 177 (MHFHKLFLSV…FSVTLIKKTK (68 aa)) is the GRAM domain. A compositionally biased stretch (polar residues) spans 220 to 233 (TSVGNSPNPSSAEN). The interval 220-239 (TSVGNSPNPSSAENSFRADR) is disordered. Ser225, Ser242, and Ser252 each carry phosphoserine. A disordered region spans residues 262-285 (RQDMEGYSSSGSQTPESENSRDFH). The segment covering 268-278 (YSSSGSQTPES) has biased composition (polar residues).

The protein is GRAM domain-containing protein 2B (GRAMD2B) of Homo sapiens (Human).